A 520-amino-acid polypeptide reads, in one-letter code: Bifunctional purine biosynthesis protein PurH (520 aa).

The 146-residue stretch at 1-146 folds into the MGS-like domain; it reads MAPVALLSVS…KNHADVAVLT (146 aa).

This sequence belongs to the PurH family.

The catalysed reaction is (6R)-10-formyltetrahydrofolate + 5-amino-1-(5-phospho-beta-D-ribosyl)imidazole-4-carboxamide = 5-formamido-1-(5-phospho-D-ribosyl)imidazole-4-carboxamide + (6S)-5,6,7,8-tetrahydrofolate. It carries out the reaction IMP + H2O = 5-formamido-1-(5-phospho-D-ribosyl)imidazole-4-carboxamide. It participates in purine metabolism; IMP biosynthesis via de novo pathway; 5-formamido-1-(5-phospho-D-ribosyl)imidazole-4-carboxamide from 5-amino-1-(5-phospho-D-ribosyl)imidazole-4-carboxamide (10-formyl THF route): step 1/1. The protein operates within purine metabolism; IMP biosynthesis via de novo pathway; IMP from 5-formamido-1-(5-phospho-D-ribosyl)imidazole-4-carboxamide: step 1/1. This Synechococcus sp. (strain CC9902) protein is Bifunctional purine biosynthesis protein PurH.